We begin with the raw amino-acid sequence, 380 residues long: Probable inactive reductase easA (380 aa).

FMN is bound by residues 25-27 (PMT), A60, Q102, and H171. Residues H171 and N174 each contribute to the substrate site. Residues K223, G299, 324–325 (GR), and R325 each bind FMN. Position 352 (Y352) interacts with substrate.

This sequence belongs to the NADH:flavin oxidoreductase/NADH oxidase family.

Its function is as follows. Probable inactive dehydrogenase; part of the gene cluster that mediates the biosynthesis of fungal ergot alkaloid ergovaline, the predominant ergopeptine product in E.festucae var. lolii. DmaW catalyzes the first step of ergot alkaloid biosynthesis by condensing dimethylallyl diphosphate (DMAP) and tryptophan to form 4-dimethylallyl-L-tryptophan. The second step is catalyzed by the methyltransferase easF that methylates 4-dimethylallyl-L-tryptophan in the presence of S-adenosyl-L-methionine, resulting in the formation of 4-dimethylallyl-L-abrine. The catalase easC and the FAD-dependent oxidoreductase easE then transform 4-dimethylallyl-L-abrine to chanoclavine-I which is further oxidized by easD in the presence of NAD(+), resulting in the formation of chanoclavine-I aldehyde. Agroclavine dehydrogenase easG then mediates the conversion of chanoclavine-I aldehyde to agroclavine via a non-enzymatic adduct reaction: the substrate is an iminium intermediate that is formed spontaneously from chanoclavine-I aldehyde in the presence of glutathione. The presence of easA is not required to complete this reaction. Further conversion of agroclavine to paspalic acid is a two-step process involving oxidation of agroclavine to elymoclavine and of elymoclavine to paspalic acid, the second step being performed by the elymoclavine oxidase cloA. Paspalic acid is then further converted to D-lysergic acid. Ergovaline is assembled from D-lysergic acid and three different amino acids by the D-lysergyl-peptide-synthetase composed of a monomudular (lpsB) and a trimodular (lpsA) nonribosomal peptide synthetase subunit. This is Probable inactive reductase easA from Epichloe festucae var. lolii (Neotyphodium lolii).